The chain runs to 526 residues: Major facilitator superfamily domain-containing protein 4A (526 aa).

Transmembrane regions (helical) follow at residues 21–41 (LTYW…GPTI), 55–75 (ITLV…IGGF), 84–104 (LSSL…IPLC), 107–127 (LLML…IDTI), 142–162 (VFLQ…PLIA), 215–235 (YAFW…FVLV), 297–317 (LSFF…DGIV), 341–361 (GYLT…AIPL), 377–397 (GVIV…FLFI), 401–421 (CLGL…EDIL), 430–450 (VLVT…GSVM), and 458–478 (FLLC…FLYF).

Belongs to the major facilitator superfamily.

The protein localises to the membrane. This is Major facilitator superfamily domain-containing protein 4A (mfsd4a) from Danio rerio (Zebrafish).